Consider the following 154-residue polypeptide: Cell cycle regulator of non-homologous end joining (154 aa).

Met1 is subject to N-acetylmethionine. Positions 1–21 (METLKSENKKRVLPSWMTAPV) match the KBM motif. The segment at 77 to 144 (EEPTLVAPDK…RSPEEEEEDA (68 aa)) is disordered. Residues 95 to 105 (ASPHTSSPGSS) show a composition bias toward low complexity. The XLM motif lies at 144–154 (ALKYVREIFFS).

In terms of assembly, interacts (via KBM motif) with XRCC5/Ku80 and XRCC6/Ku70 heterodimer. Interacts (via XLF motif) with TRIM28/KAP1, ATM, MRE11, NBN and RAD50. Interacts with splicing factor SF3B1. Interacts with ERCC6L2; this interaction is DNA independent.

The protein resides in the cytoplasm. It localises to the nucleus. The protein localises to the chromosome. Cell-cycle-specific regulator of classical non-homologous end joining (NHEJ) of DNA double-strand break (DSB) repair, which can act both as an activator or inhibitor of NHEJ, depending on the cell cycle phase. Acts as a regulator of DNA repair pathway choice by specifically inhibiting classical NHEJ during the S and G2 phases, thereby promoting error-free repair by homologous recombination during cell cycle phases when sister chromatids are present. Preferentially protects single-stranded overhangs at break sites by inhibiting classical NHEJ, thereby creating a local environment that favors homologous recombination. Acts via interaction with XRCC5/Ku80 and XRCC6/Ku70. In contrast, acts as an activator of NHEJ during G1 phase of the cell cycle: promotes classical NHEJ in G1 phase cells via multivalent interactions that increase the affinity of DNA damage response proteins for DSB-associated chromatin. Also involved in immunoglobulin V(D)J recombination. May act as a regulator of proteasome. In case of infection by a retrovirus, may regulate the proteasome during the uncoating phase of retrovirus. The polypeptide is Cell cycle regulator of non-homologous end joining (Cricetulus griseus (Chinese hamster)).